The chain runs to 221 residues: Adenylate kinase (221 aa).

Residue 10-15 (GAGKGT) participates in ATP binding. Positions 30–59 (STGDIFRQNLRDNTELGKLAKEYMDKGLLV) are NMP. AMP contacts are provided by residues threonine 31, arginine 36, 57–59 (LLV), 85–88 (GYPR), and glutamine 92. The interval 126–163 (GRRVCPVCGATYHIKTSPPKVDNVCDKCGSELIQRSDD) is LID. Arginine 127 contributes to the ATP binding site. Residues cysteine 130 and cysteine 133 each contribute to the Zn(2+) site. 136–137 (TY) lines the ATP pocket. Zn(2+)-binding residues include cysteine 150 and cysteine 153. AMP is bound by residues arginine 160 and arginine 171. Lysine 199 contributes to the ATP binding site.

Belongs to the adenylate kinase family. In terms of assembly, monomer.

It localises to the cytoplasm. It carries out the reaction AMP + ATP = 2 ADP. It functions in the pathway purine metabolism; AMP biosynthesis via salvage pathway; AMP from ADP: step 1/1. In terms of biological role, catalyzes the reversible transfer of the terminal phosphate group between ATP and AMP. Plays an important role in cellular energy homeostasis and in adenine nucleotide metabolism. The sequence is that of Adenylate kinase from Caldanaerobacter subterraneus subsp. tengcongensis (strain DSM 15242 / JCM 11007 / NBRC 100824 / MB4) (Thermoanaerobacter tengcongensis).